Consider the following 522-residue polypeptide: Anti-sigma-I factor RsgI4 (522 aa).

Topologically, residues 1–51 are cytoplasmic; it reads MNLGVVIKIKRKKAIIVTETGEFKAVNARNGMFLGQKILFDQQDVIENNRN. Residues 2 to 49 form the RsgI N-terminal anti-sigma domain; it reads NLGVVIKIKRKKAIIVTETGEFKAVNARNGMFLGQKILFDQQDVIENN. A helical transmembrane segment spans residues 52–72; it reads GIGLAYSAAIAGMVAVFVFMF. Residues 73–522 are Extracellular-facing; it reads TYFGLHNFNG…SGILKWGREP (450 aa). The segment covering 311–361 has biased composition (low complexity); sequence SAKTPERATTVPVNTPVKPTDAPTKSPATATATATRAPVKATATPAKTLKP. Residues 311 to 371 form a disordered region; the sequence is SAKTPERATT…SDTPVKTPDG (61 aa). Residues 371-522 enclose the CBM3 domain; it reads GEQSVKVRFY…SGILKWGREP (152 aa).

Interacts (via RsgI N-terminal anti-sigma domain) with SigI4.

Its subcellular location is the cell membrane. Functionally, anti-sigma factor for SigI4. Negatively regulates SigI4 activity through direct interaction. Binding of the polysaccharide substrate to the extracellular C-terminal sensing domain of RsgI4 may induce a conformational change in its N-terminal cytoplasmic region, leading to the release and activation of SigI4. This chain is Anti-sigma-I factor RsgI4, found in Acetivibrio thermocellus (strain ATCC 27405 / DSM 1237 / JCM 9322 / NBRC 103400 / NCIMB 10682 / NRRL B-4536 / VPI 7372) (Clostridium thermocellum).